The chain runs to 154 residues: Myoglobin (154 aa).

Residues 2–148 form the Globin domain; it reads VLSEGEWQLV…FRKDIAAKYK (147 aa). The residue at position 4 (Ser-4) is a Phosphoserine. His-65 lines the nitrite pocket. Residue His-65 participates in O2 binding. The residue at position 68 (Thr-68) is a Phosphothreonine. His-94 contacts heme b.

It belongs to the globin family. As to quaternary structure, monomeric.

It localises to the cytoplasm. Its subcellular location is the sarcoplasm. The enzyme catalyses Fe(III)-heme b-[protein] + nitric oxide + H2O = Fe(II)-heme b-[protein] + nitrite + 2 H(+). It carries out the reaction H2O2 + AH2 = A + 2 H2O. Functionally, monomeric heme protein which primary function is to store oxygen and facilitate its diffusion within muscle tissues. Reversibly binds oxygen through a pentacoordinated heme iron and enables its timely and efficient release as needed during periods of heightened demand. Depending on the oxidative conditions of tissues and cells, and in addition to its ability to bind oxygen, it also has a nitrite reductase activity whereby it regulates the production of bioactive nitric oxide. Under stress conditions, like hypoxia and anoxia, it also protects cells against reactive oxygen species thanks to its pseudoperoxidase activity. In Kogia breviceps (Pygmy sperm whale), this protein is Myoglobin (MB).